The chain runs to 688 residues: Sciellin (688 aa).

The segment covering 1–25 (MSNVTLRKMSPTGNEMKSTTQGTTR) has biased composition (polar residues). The interval 1-29 (MSNVTLRKMSPTGNEMKSTTQGTTRKQQD) is disordered. At Lys-83 the chain carries N6-acetyllysine. The interval 134–231 (QPGGSLNANT…TNRSAERNIR (98 aa)) is disordered. Residues 140 to 154 (NANTSNTIASTSATT) show a composition bias toward low complexity. Positions 186–195 (VHPPIPPKPS) are enriched in pro residues. A run of 16 repeats spans residues 251-266 (GEELDNLIKMNKSLNR), 267-286 (NQGLDSLFRANPKVEEREKR), 287-306 (AKSLESLIYMSTRTDKDGKG), 307-326 (IQSLGSPIKVNQRTDKNEKG), 327-346 (RQNLESVAKVNARMNKTSRR), 347-366 (SEDLDNATEVNPKGHENTTG), 367-386 (KKDLDGLIKVDPETNKNITR), 387-406 (GQSLDNLIKVTPEVKRSNQG), 407-426 (SKDLNNFIKVYPGTEKSTEG), 427-446 (GQSLDSLIKVTPERNRTNQG), 447-465 (NQDLENLIKVIPSANKSSE), 466-484 (QGLDEHINVSPKAVKNTDG), 485-504 (KQDLDKLIKVNPEIFTNNQR), 505-523 (NQDLANLIKVNPAVIRNNQ), 524-543 (SQDLDNLIKVKPSALRNTNR), and 544-563 (DQNLENLIEVNSHVSENKNG). Residues 251 to 563 (GEELDNLIKM…NSHVSENKNG (313 aa)) form a 16 X approximate tandem repeats region. A Phosphoserine modification is found at Ser-289. Residues 340 to 373 (MNKTSRRSEDLDNATEVNPKGHENTTGKKDLDGL) are disordered. Residues 358-373 (PKGHENTTGKKDLDGL) are compositionally biased toward basic and acidic residues. Ser-389 bears the Phosphoserine mark. In terms of domain architecture, LIM zinc-binding spans 619-685 (DMCTYCRKPL…EPCYSKIMAK (67 aa)).

In terms of tissue distribution, highly expressed in esophagus. It is also expressed in keratinocytes, amniotic tissue, foreskin stratum spinosum and stratum granulosum, hair follicle and nail.

Its subcellular location is the cytoplasm. The protein resides in the membrane. Functionally, may function in the assembly or regulation of proteins in the cornified envelope. The LIM domain may be involved in homotypic or heterotypic associations and may function to localize sciellin to the cornified envelope. In Homo sapiens (Human), this protein is Sciellin (SCEL).